The sequence spans 417 residues: Serine hydroxymethyltransferase (417 aa).

Residues leucine 121 and 125 to 127 (GHL) each bind (6S)-5,6,7,8-tetrahydrofolate. An N6-(pyridoxal phosphate)lysine modification is found at lysine 229. 355-357 (SPF) provides a ligand contact to (6S)-5,6,7,8-tetrahydrofolate.

This sequence belongs to the SHMT family. Homodimer. It depends on pyridoxal 5'-phosphate as a cofactor.

The protein localises to the cytoplasm. It carries out the reaction (6R)-5,10-methylene-5,6,7,8-tetrahydrofolate + glycine + H2O = (6S)-5,6,7,8-tetrahydrofolate + L-serine. It functions in the pathway one-carbon metabolism; tetrahydrofolate interconversion. The protein operates within amino-acid biosynthesis; glycine biosynthesis; glycine from L-serine: step 1/1. In terms of biological role, catalyzes the reversible interconversion of serine and glycine with tetrahydrofolate (THF) serving as the one-carbon carrier. This reaction serves as the major source of one-carbon groups required for the biosynthesis of purines, thymidylate, methionine, and other important biomolecules. Also exhibits THF-independent aldolase activity toward beta-hydroxyamino acids, producing glycine and aldehydes, via a retro-aldol mechanism. The polypeptide is Serine hydroxymethyltransferase (Buchnera aphidicola subsp. Baizongia pistaciae (strain Bp)).